A 76-amino-acid chain; its full sequence is Defensin-like protein 164 (76 aa).

Residues 1-25 (MAKLLCSYLFICMFVLSGFLVFSSA) form the signal peptide. Disulfide bonds link C31/C76, C41/C61, C46/C70, and C50/C72.

This sequence belongs to the DEFL family.

The protein localises to the secreted. The polypeptide is Defensin-like protein 164 (LCR38) (Arabidopsis thaliana (Mouse-ear cress)).